Here is a 140-residue protein sequence, read N- to C-terminus: MDSPENTVPASVDIYAVLSILLVAIMWGATNPFIKRGSIGYNELKADSKLGQLWLEVRFLITRWQYLLPLVINQLGSIVYVLTLQRTELSLTVPMANSLTFVFTAITARLLGERQSGWKIYCGMTLVILGTVICGLDKML.

A run of 4 helical transmembrane segments spans residues 14–34 (IYAV…NPFI), 64–84 (WQYL…VLTL), 88–108 (ELSL…AITA), and 116–136 (SGWK…ICGL).

This sequence belongs to the TMEM234 family.

Its subcellular location is the membrane. In Anopheles gambiae (African malaria mosquito), this protein is Transmembrane protein 234 homolog.